We begin with the raw amino-acid sequence, 339 residues long: 2-halobenzoate 1,2-dioxygenase electron transfer component (339 aa).

The 2Fe-2S ferredoxin-type domain occupies His-3–Ser-96. [2Fe-2S] cluster-binding residues include Cys-40, Cys-45, Cys-48, and Cys-80. The ferredoxin-reductase stretch occupies residues Ala-98–Thr-336. The region spanning Lys-103–Arg-203 is the FAD-binding FR-type domain.

It belongs to the bacterial ring-hydroxylating dioxygenase ferredoxin reductase family. In terms of assembly, monomer. It is part of 2-halobenzoate dioxygenase two component enzyme system. The other component is a dioxygenase component consisting of 3 large (CbdA) subunits and 3 small (CbdB) subunits. FAD is required as a cofactor. The cofactor is [2Fe-2S] cluster.

It carries out the reaction 2 reduced [2Fe-2S]-[ferredoxin] + NAD(+) + H(+) = 2 oxidized [2Fe-2S]-[ferredoxin] + NADH. Its pathway is xenobiotic degradation; benzoate degradation via CoA ligation. Functionally, electron transfer component of 2-halobenzoate 1,2-dioxygenase system. The protein is 2-halobenzoate 1,2-dioxygenase electron transfer component (cbdC) of Burkholderia cepacia (Pseudomonas cepacia).